The following is a 732-amino-acid chain: Catalase-peroxidase (732 aa).

The tryptophyl-tyrosyl-methioninium (Trp-Tyr) (with M-245) cross-link spans 96–219 (WHSAGTYRIG…LGAVQMGLIY (124 aa)). H97 serves as the catalytic Proton acceptor. The segment at residues 219–245 (YVNPEGPNGHPDPVASGRDIRETFGRM) is a cross-link (tryptophyl-tyrosyl-methioninium (Tyr-Met) (with W-96)). H260 contributes to the heme b binding site.

Belongs to the peroxidase family. Peroxidase/catalase subfamily. Homodimer or homotetramer. The cofactor is heme b. Post-translationally, formation of the three residue Trp-Tyr-Met cross-link is important for the catalase, but not the peroxidase activity of the enzyme.

The enzyme catalyses H2O2 + AH2 = A + 2 H2O. It carries out the reaction 2 H2O2 = O2 + 2 H2O. Functionally, bifunctional enzyme with both catalase and broad-spectrum peroxidase activity. The polypeptide is Catalase-peroxidase (Acaryochloris marina (strain MBIC 11017)).